The sequence spans 377 residues: tRNA-splicing endonuclease subunit SEN2 (377 aa).

The stretch at 119-174 (ETEMTLEKVTQQRRLQRLEFKKERAKLERELLELRKKGGHIDEENILLEKQRESLR) forms a coiled coil. Catalysis depends on residues tyrosine 289, histidine 297, and lysine 328.

It belongs to the tRNA-intron endonuclease family. Heterotetramer composed of SEN2, SEN15, SEN34 and SEN54. Interacts directly with SEN54.

The protein localises to the nucleus. It is found in the endomembrane system. Its subcellular location is the mitochondrion outer membrane. It carries out the reaction pretRNA = a 3'-half-tRNA molecule with a 5'-OH end + a 5'-half-tRNA molecule with a 2',3'-cyclic phosphate end + an intron with a 2',3'-cyclic phosphate and a 5'-hydroxyl terminus.. Functionally, constitutes one of the two catalytic subunit of the tRNA-splicing endonuclease complex, a complex responsible for identification and cleavage of the splice sites in pre-tRNA. It cleaves pre-tRNA at the 5'- and 3'-splice sites to release the intron. The products are an intron and two tRNA half-molecules bearing 2',3'-cyclic phosphate and 5'-OH termini. There are no conserved sequences at the splice sites, but the intron is invariably located at the same site in the gene, placing the splice sites an invariant distance from the constant structural features of the tRNA body. This subunit may anchor the endonuclease complex to the nuclear membrane. Probably carries the active site for 5'-splice site cleavage. This Saccharomyces cerevisiae (strain ATCC 204508 / S288c) (Baker's yeast) protein is tRNA-splicing endonuclease subunit SEN2 (SEN2).